The primary structure comprises 100 residues: Aspartyl/glutamyl-tRNA(Asn/Gln) amidotransferase subunit C (100 aa).

Belongs to the GatC family. Heterotrimer of A, B and C subunits.

The enzyme catalyses L-glutamyl-tRNA(Gln) + L-glutamine + ATP + H2O = L-glutaminyl-tRNA(Gln) + L-glutamate + ADP + phosphate + H(+). It carries out the reaction L-aspartyl-tRNA(Asn) + L-glutamine + ATP + H2O = L-asparaginyl-tRNA(Asn) + L-glutamate + ADP + phosphate + 2 H(+). Its function is as follows. Allows the formation of correctly charged Asn-tRNA(Asn) or Gln-tRNA(Gln) through the transamidation of misacylated Asp-tRNA(Asn) or Glu-tRNA(Gln) in organisms which lack either or both of asparaginyl-tRNA or glutaminyl-tRNA synthetases. The reaction takes place in the presence of glutamine and ATP through an activated phospho-Asp-tRNA(Asn) or phospho-Glu-tRNA(Gln). This is Aspartyl/glutamyl-tRNA(Asn/Gln) amidotransferase subunit C from Novosphingobium aromaticivorans (strain ATCC 700278 / DSM 12444 / CCUG 56034 / CIP 105152 / NBRC 16084 / F199).